A 712-amino-acid chain; its full sequence is Ribosome-releasing factor 2, mitochondrial (712 aa).

A mitochondrion-targeting transit peptide spans 1-29 (MLRCAWQNGPRQSNRWLRHLSNQIWKRSY). One can recognise a tr-type G domain in the interval 31–310 (SKIRNIGILA…AVNSYLPAPE (280 aa)). GTP-binding positions include 40–47 (AHIDAGKT), 104–108 (DTPGH), and 158–161 (NKMD).

It belongs to the TRAFAC class translation factor GTPase superfamily. Classic translation factor GTPase family. EF-G/EF-2 subfamily.

The protein localises to the mitochondrion. Mitochondrial GTPase that mediates the disassembly of ribosomes from messenger RNA at the termination of mitochondrial protein biosynthesis. Not involved in the GTP-dependent ribosomal translocation step during translation elongation. The chain is Ribosome-releasing factor 2, mitochondrial from Drosophila yakuba (Fruit fly).